We begin with the raw amino-acid sequence, 524 residues long: Tubulin-specific chaperone E (524 aa).

Ser-2 carries the N-acetylserine modification. A CAP-Gly domain is found at 27 to 71; the sequence is GAVPPVAGLWLGVEWDNPERGKHDGSHEGTMYFKCRHPTGGSFVR. 7 LRR repeats span residues 154–175, 180–201, 206–227, 231–253, 254–275, 279–300, and 309–330; these read NIRV…VLIA, DLEA…PTLT, TLKT…HCAP, VLEE…NVLQ, KMRL…SLIA, RLEH…DAEI, and ALKY…NELD. In terms of domain architecture, LRRCT spans 343-381; sequence NPLSKADKAEEIIIAKIAQLRTLNRCQILPEERRGAELD. Position 460 is an N6-acetyllysine (Lys-460). Ser-492 is modified (phosphoserine).

Belongs to the TBCE family. In terms of assembly, supercomplex made of cofactors A to E. Cofactors A and D function by capturing and stabilizing tubulin in a quasi-native conformation. Cofactor E binds to the cofactor D-tubulin complex; interaction with cofactor C then causes the release of tubulin polypeptides that are committed to the native state. Cofactors B and E can form a heterodimer which binds to alpha-tubulin and enhances their ability to dissociate tubulin heterodimers. Interacts with TBCD. In terms of tissue distribution, ubiquitously expressed.

It localises to the cytoplasm. The protein localises to the cytoskeleton. Tubulin-folding protein; involved in the second step of the tubulin folding pathway and in the regulation of tubulin heterodimer dissociation. Required for correct organization of microtubule cytoskeleton and mitotic splindle, and maintenance of the neuronal microtubule network. This is Tubulin-specific chaperone E (Tbce) from Mus musculus (Mouse).